Reading from the N-terminus, the 387-residue chain is Early growth response protein 3 (387 aa).

The disordered stretch occupies residues 241–283 (PGFGSLPQPPLTLKPIRPRKYPNRPSKTPLHERPHACPAEGCD). Over residues 269–283 (PLHERPHACPAEGCD) the composition is skewed to basic and acidic residues. 3 C2H2-type zinc fingers span residues 275–299 (HACP…LRIH), 305–327 (FQCR…IRTH), and 333–355 (FACE…AKIH). Positions 348 to 387 (RKRHAKIHLKQKEKKSEKGGAPSASSAPTVSLAPVVTTCA) are disordered. The span at 350 to 360 (RHAKIHLKQKE) shows a compositional bias: basic residues.

The protein belongs to the EGR C2H2-type zinc-finger protein family.

The protein localises to the nucleus. Functionally, probable transcription factor involved in muscle spindle development. This chain is Early growth response protein 3 (Egr3), found in Mus musculus (Mouse).